Reading from the N-terminus, the 905-residue chain is Alanine--tRNA ligase (905 aa).

Zn(2+)-binding residues include His-582, His-586, Cys-687, and His-691.

The protein belongs to the class-II aminoacyl-tRNA synthetase family. The cofactor is Zn(2+).

It localises to the cytoplasm. It catalyses the reaction tRNA(Ala) + L-alanine + ATP = L-alanyl-tRNA(Ala) + AMP + diphosphate. Functionally, catalyzes the attachment of alanine to tRNA(Ala) in a two-step reaction: alanine is first activated by ATP to form Ala-AMP and then transferred to the acceptor end of tRNA(Ala). Also edits incorrectly charged Ser-tRNA(Ala) and Gly-tRNA(Ala) via its editing domain. This chain is Alanine--tRNA ligase, found in Mycoplasma mobile (strain ATCC 43663 / 163K / NCTC 11711) (Mesomycoplasma mobile).